Reading from the N-terminus, the 568-residue chain is Urease subunit alpha (568 aa).

The Urease domain maps to 130–568 (GGIDTHIHFI…LPMAQRYFLF (439 aa)). Ni(2+)-binding residues include H135, H137, and K218. Residue K218 is modified to N6-carboxylysine. Residue H220 participates in substrate binding. 2 residues coordinate Ni(2+): H247 and H273. H321 serves as the catalytic Proton donor. D361 contributes to the Ni(2+) binding site.

Belongs to the metallo-dependent hydrolases superfamily. Urease alpha subunit family. As to quaternary structure, heterotrimer of UreA (gamma), UreB (beta) and UreC (alpha) subunits. Three heterotrimers associate to form the active enzyme. Ni cation is required as a cofactor. Carboxylation allows a single lysine to coordinate two nickel ions.

It localises to the cytoplasm. The catalysed reaction is urea + 2 H2O + H(+) = hydrogencarbonate + 2 NH4(+). The protein operates within nitrogen metabolism; urea degradation; CO(2) and NH(3) from urea (urease route): step 1/1. This Burkholderia multivorans (strain ATCC 17616 / 249) protein is Urease subunit alpha.